Consider the following 148-residue polypeptide: Hemoglobin subunit beta-A (148 aa).

Positions 3-148 (DWTDAERAAI…VVSALGRQYH (146 aa)) constitute a Globin domain. Positions 64 and 93 each coordinate heme b.

Belongs to the globin family. In terms of assembly, heterotetramer of two alpha chains and two beta chains. In terms of tissue distribution, red blood cells.

Involved in oxygen transport from gills to the various peripheral tissues. This Seriola quinqueradiata (Five-ray yellowtail) protein is Hemoglobin subunit beta-A (hbb1).